The chain runs to 67 residues: Beta-defensin 1 (67 aa).

A signal peptide spans 1–22 (MRIHYLLFAVLFLFLMPVPGEG). Disulfide bonds link Cys33–Cys62, Cys40–Cys55, and Cys45–Cys63.

In terms of assembly, monomer. Homodimer. In terms of tissue distribution, highly expressed in tongue, nasopharyngeal mucosa and skin, and to a lower extent in the Eustachian tube, lung and trachea.

The protein localises to the secreted. It localises to the membrane. Has antibacterial activity against Gram-positive bacterium S.pneumoniae Serotype 14. Is also active against Gram-negative bacteria M.catarrhalis 1857, and non-typeable H.influenzae strains 86-028NP and 1128. Has antifungal activity against C.albicans. May have a role in maintaining sterility in the middle ear. May act as a ligand for C-C chemokine receptor CCR6. Positively regulates the sperm motility and bactericidal activity in a CCR6-dependent manner. Binds to CCR6 and triggers Ca2+ mobilization in the sperm which is important for its motility. The chain is Beta-defensin 1 (DEFB1) from Chinchilla lanigera (Long-tailed chinchilla).